A 396-amino-acid polypeptide reads, in one-letter code: Phosphopentomutase (396 aa).

6 residues coordinate Mn(2+): Asp-13, Asp-288, His-293, Asp-329, His-330, and His-341.

The protein belongs to the phosphopentomutase family. Requires Mn(2+) as cofactor.

It is found in the cytoplasm. The enzyme catalyses 2-deoxy-alpha-D-ribose 1-phosphate = 2-deoxy-D-ribose 5-phosphate. It carries out the reaction alpha-D-ribose 1-phosphate = D-ribose 5-phosphate. Its pathway is carbohydrate degradation; 2-deoxy-D-ribose 1-phosphate degradation; D-glyceraldehyde 3-phosphate and acetaldehyde from 2-deoxy-alpha-D-ribose 1-phosphate: step 1/2. Its function is as follows. Isomerase that catalyzes the conversion of deoxy-ribose 1-phosphate (dRib-1-P) and ribose 1-phosphate (Rib-1-P) to deoxy-ribose 5-phosphate (dRib-5-P) and ribose 5-phosphate (Rib-5-P), respectively. The chain is Phosphopentomutase from Clostridium botulinum (strain Alaska E43 / Type E3).